Consider the following 378-residue polypeptide: Anhydro-N-acetylmuramic acid kinase (378 aa).

Residue 23 to 30 (GTSMDGAD) participates in ATP binding.

The protein belongs to the anhydro-N-acetylmuramic acid kinase family.

It catalyses the reaction 1,6-anhydro-N-acetyl-beta-muramate + ATP + H2O = N-acetyl-D-muramate 6-phosphate + ADP + H(+). Its pathway is amino-sugar metabolism; 1,6-anhydro-N-acetylmuramate degradation. It participates in cell wall biogenesis; peptidoglycan recycling. Functionally, catalyzes the specific phosphorylation of 1,6-anhydro-N-acetylmuramic acid (anhMurNAc) with the simultaneous cleavage of the 1,6-anhydro ring, generating MurNAc-6-P. Is required for the utilization of anhMurNAc either imported from the medium or derived from its own cell wall murein, and thus plays a role in cell wall recycling. The sequence is that of Anhydro-N-acetylmuramic acid kinase from Bordetella bronchiseptica (strain ATCC BAA-588 / NCTC 13252 / RB50) (Alcaligenes bronchisepticus).